Consider the following 287-residue polypeptide: MMKNILAIQSHVVYGHAGNSAAEFPMRRLGANVWPLNTVQFSNHTQYGKWTGCVMPPSHLTEIVQGIAAIDKLHTCDAVLSGYLGSAEQGEHILGIVRQVKAANPQAKYFCDPVMGHPEKGCIVAPGVAEFHVRHGLPASDIIAPNLVELEILCEHAVNNVEEAVLAARELIEQGPQIVLVKHLARAGYSRDRFEMLLVTADEVWHISRPLVDFGMRQPVGVGDVTSGLLLVKLLQGATLQEALEHVTAAVYEIMVTTKAMQEYELQVVAAQDRIAKPEHYFSATKL.

Residues S10 and 45–46 (TQ) contribute to the substrate site. ATP is bound by residues D112, A144, E149, K182, and 209–212 (RPLV). D224 provides a ligand contact to substrate.

Belongs to the pyridoxine kinase family. PdxY subfamily. Homodimer. It depends on Mg(2+) as a cofactor.

It catalyses the reaction pyridoxal + ATP = pyridoxal 5'-phosphate + ADP + H(+). It functions in the pathway cofactor metabolism; pyridoxal 5'-phosphate salvage; pyridoxal 5'-phosphate from pyridoxal: step 1/1. Pyridoxal kinase involved in the salvage pathway of pyridoxal 5'-phosphate (PLP). Catalyzes the phosphorylation of pyridoxal to PLP. The protein is Pyridoxal kinase PdxY of Shigella flexneri.